The chain runs to 367 residues: Protein NDRG4-B (367 aa).

A compositionally biased stretch (basic and acidic residues) spans 1 to 12 (MSELRFPEEKPL). 2 disordered regions span residues 1–21 (MSEL…TEME) and 333–367 (LTSA…EVSC). The segment covering 347–367 (CTQSESSDGIGQINHTMEVSC) has biased composition (polar residues).

The protein belongs to the NDRG family.

Its subcellular location is the cytoplasm. The protein localises to the cytosol. Functionally, contributes to the maintenance of intracerebral BDNF levels within the normal range. May enhance growth factor-induced ERK1 and ERK2 phosphorylation. May attenuate growth factor-promoted ELK1 phosphorylation in a microtubule-dependent manner. This is Protein NDRG4-B (ndrg4-b) from Xenopus laevis (African clawed frog).